A 70-amino-acid chain; its full sequence is Beta-defensin 107A (70 aa).

Positions 1 to 26 are cleaved as a signal peptide; it reads MPGAMKIFFFIFAALILLAQIFQART. Cystine bridges form between cysteine 41–cysteine 55 and cysteine 45–cysteine 64.

It belongs to the beta-defensin family.

The protein resides in the secreted. In terms of biological role, has antibacterial activity. The protein is Beta-defensin 107A (DEFB107A) of Pan troglodytes (Chimpanzee).